We begin with the raw amino-acid sequence, 156 residues long: Small ribosomal subunit protein uS7 (156 aa).

Belongs to the universal ribosomal protein uS7 family. In terms of assembly, part of the 30S ribosomal subunit. Contacts proteins S9 and S11.

In terms of biological role, one of the primary rRNA binding proteins, it binds directly to 16S rRNA where it nucleates assembly of the head domain of the 30S subunit. Is located at the subunit interface close to the decoding center, probably blocks exit of the E-site tRNA. This is Small ribosomal subunit protein uS7 from Mycobacterium ulcerans (strain Agy99).